The following is a 130-amino-acid chain: Small ribosomal subunit protein eS17 (130 aa).

Positions 74–84 (QEEERERRDNY) are enriched in basic and acidic residues. Residues 74–97 (QEEERERRDNYMPEISTVDPSQLT) are disordered.

The protein belongs to the eukaryotic ribosomal protein eS17 family.

This chain is Small ribosomal subunit protein eS17 (rps-17), found in Caenorhabditis elegans.